Consider the following 239-residue polypeptide: Ribulose-phosphate 3-epimerase (239 aa).

S9 serves as a coordination point for substrate. H34, D36, and H78 together coordinate a divalent metal cation. D36 functions as the Proton acceptor in the catalytic mechanism. Substrate-binding positions include H78, 154 to 157 (GFGG), 183 to 185 (DGG), and 205 to 207 (GTS). D183 contributes to the a divalent metal cation binding site. Residue D183 is the Proton donor of the active site.

It belongs to the ribulose-phosphate 3-epimerase family. Co(2+) serves as cofactor. It depends on Fe(2+) as a cofactor. The cofactor is Mn(2+). Requires Zn(2+) as cofactor.

It catalyses the reaction D-ribulose 5-phosphate = D-xylulose 5-phosphate. The protein operates within carbohydrate degradation; pentose phosphate pathway; D-xylulose 5-phosphate from D-ribulose 5-phosphate (non-oxidative stage): step 1/1. Functionally, catalyzes the reversible epimerization of D-ribulose 5-phosphate to D-xylulose 5-phosphate. The polypeptide is Ribulose-phosphate 3-epimerase (RPE1) (Eremothecium gossypii (strain ATCC 10895 / CBS 109.51 / FGSC 9923 / NRRL Y-1056) (Yeast)).